Reading from the N-terminus, the 256-residue chain is Isoprenyl transferase (256 aa).

The active site involves aspartate 33. A Mg(2+)-binding site is contributed by aspartate 33. Residues 34–37 (GNGR), tryptophan 38, arginine 46, histidine 50, and 78–80 (STE) contribute to the substrate site. Residue asparagine 81 is the Proton acceptor of the active site. Substrate-binding positions include tryptophan 82, arginine 84, arginine 201, and 207-209 (RIS). Residue glutamate 220 participates in Mg(2+) binding.

The protein belongs to the UPP synthase family. Homodimer. It depends on Mg(2+) as a cofactor.

Its function is as follows. Catalyzes the condensation of isopentenyl diphosphate (IPP) with allylic pyrophosphates generating different type of terpenoids. This is Isoprenyl transferase from Staphylococcus aureus (strain COL).